The following is a 230-amino-acid chain: uncharacterized protein (230 aa).

Residues Glu74, Glu76, and Asp105 each coordinate a divalent metal cation.

Belongs to the FAH family.

This is an uncharacterized protein from Pyrococcus horikoshii (strain ATCC 700860 / DSM 12428 / JCM 9974 / NBRC 100139 / OT-3).